Here is a 499-residue protein sequence, read N- to C-terminus: ADP,ATP carrier protein 5 (499 aa).

Helical transmembrane passes span 25–45, 61–81, 93–113, 148–168, 183–203, 223–243, 286–306, 327–347, 356–376, 380–400, and 468–488; these read LGKF…QNVL, IAGF…VIIY, IFYY…FVIY, YIVY…LLFW, FYTL…FLMM, ITLV…CCLL, LWLL…VEAV, LYIL…NNIM, AVIS…LIVF, ILSL…VSIG, and LISP…IYAV.

This sequence belongs to the ADP/ATP translocase tlc family.

It localises to the cell membrane. In terms of biological role, provides the rickettsial cell with host ATP in exchange for rickettsial ADP. This is an obligate exchange system. This energy acquiring activity is an important component of rickettsial parasitism. This chain is ADP,ATP carrier protein 5 (tlcE), found in Rickettsia conorii (strain ATCC VR-613 / Malish 7).